A 433-amino-acid polypeptide reads, in one-letter code: Putative ankyrin repeat protein R784 (433 aa).

ANK repeat units follow at residues 44–70 (NQNL…KTDV), 71–101 (NGLK…NNDL), 102–131 (LDLH…IVII), 179–205 (FYDS…NQCS), 206–235 (VRQK…RIFS), 237–264 (RRLI…IDLA), 265–294 (QNNF…DIHF), 296–321 (NGEC…NKVY), 322–351 (MSEK…ACMS), and 380–409 (NMRK…KLRE).

The chain is Putative ankyrin repeat protein R784 from Acanthamoeba polyphaga mimivirus (APMV).